Consider the following 1063-residue polypeptide: Lysine-specific demethylase phf2 (1063 aa).

The PHD-type zinc finger occupies 5-56 (PVYCICRLPYDVTQFMIECDACKDWFHGSCVGVDEDEAPDIDIYHCPNCEKT). Residues 197–353 (FSDARMANIV…MQMRAYEVEK (157 aa)) enclose the JmjC domain. Threonine 246 is a binding site for 2-oxoglutarate. Positions 249 and 251 each coordinate Fe cation. 2-oxoglutarate is bound by residues tyrosine 259 and lysine 266. A Fe cation-binding site is contributed by asparagine 321. Disordered regions lie at residues 448–546 (VSDS…LAAL), 704–761 (NIKE…SAGI), 773–864 (GIDY…DMFD), and 879–1045 (YVYP…MATA). Low complexity predominate over residues 460–477 (SEPSNSKPPAEEPPSALS). Basic and acidic residues-rich tracts occupy residues 513–540 (PPKE…EKKP) and 723–745 (KSPD…DVKG). Over residues 746-755 (RNSKVSKKKG) the composition is skewed to basic residues. Residues 776–791 (YSNNSQPPASPSTQEA) are compositionally biased toward polar residues. Positions 813-833 (SNSQAKNNSHSSAASKKPSGA) are enriched in low complexity. Basic residues predominate over residues 842 to 852 (RPAKRLPKKTQ). The segment covering 920–929 (RQERPAREGA) has biased composition (basic and acidic residues). Residues 953–964 (IKKKKKSAKKKP) are compositionally biased toward basic residues. The segment covering 965 to 975 (IVAEESHKLSH) has biased composition (basic and acidic residues). Low complexity-rich tracts occupy residues 976–988 (DSSS…DSES) and 1021–1031 (SSSSSSQNASS). Serine 1021 bears the Phosphoserine; by PKA mark.

This sequence belongs to the JHDM1 histone demethylase family. JHDM1D subfamily.

Its subcellular location is the nucleus. It localises to the nucleolus. It is found in the chromosome. The protein resides in the centromere. The protein localises to the kinetochore. Lysine demethylase that demethylates both histones and non-histone proteins. Mediates demethylation of dimethylated 'Lys-9' of histone H3 (H3K9me2). Recruited to trimethylated 'Lys-4' of histone H3 (H3K4me3) at rDNA promoters and promotes expression of rDNA. This chain is Lysine-specific demethylase phf2 (phf2), found in Danio rerio (Zebrafish).